Here is a 339-residue protein sequence, read N- to C-terminus: tRNA (cytidine(56)-2'-O)-methyltransferase (339 aa).

Residues L79 and 105–109 (GSEKV) contribute to the S-adenosyl-L-methionine site. Residues 188-295 (LIEHVKAVEG…VAQADNLFAG (108 aa)) enclose the HD domain.

The protein belongs to the aTrm56 family. In terms of assembly, homodimer.

The protein localises to the cytoplasm. The catalysed reaction is cytidine(56) in tRNA + S-adenosyl-L-methionine = 2'-O-methylcytidine(56) in tRNA + S-adenosyl-L-homocysteine + H(+). Its function is as follows. Specifically catalyzes the AdoMet-dependent 2'-O-ribose methylation of cytidine at position 56 in tRNAs. The chain is tRNA (cytidine(56)-2'-O)-methyltransferase from Thermoplasma acidophilum (strain ATCC 25905 / DSM 1728 / JCM 9062 / NBRC 15155 / AMRC-C165).